An 802-amino-acid chain; its full sequence is Aldehyde dehydrogenase family 16 member A1 (802 aa).

The protein belongs to the aldehyde dehydrogenase family. In terms of assembly, interacts with SPG21.

This chain is Aldehyde dehydrogenase family 16 member A1 (Aldh16a1), found in Mus musculus (Mouse).